The chain runs to 159 residues: Phosphopantetheine adenylyltransferase (159 aa).

Threonine 9 is a substrate binding site. ATP-binding positions include threonine 9–phenylalanine 10 and histidine 17. The substrate site is built by lysine 41, leucine 73, and arginine 87. ATP contacts are provided by residues glycine 88–arginine 90, glutamate 98, and tyrosine 123–threonine 129.

It belongs to the bacterial CoaD family. Homohexamer. Mg(2+) is required as a cofactor.

The protein resides in the cytoplasm. It catalyses the reaction (R)-4'-phosphopantetheine + ATP + H(+) = 3'-dephospho-CoA + diphosphate. Its pathway is cofactor biosynthesis; coenzyme A biosynthesis; CoA from (R)-pantothenate: step 4/5. Functionally, reversibly transfers an adenylyl group from ATP to 4'-phosphopantetheine, yielding dephospho-CoA (dPCoA) and pyrophosphate. This chain is Phosphopantetheine adenylyltransferase, found in Pseudomonas syringae pv. tomato (strain ATCC BAA-871 / DC3000).